A 367-amino-acid polypeptide reads, in one-letter code: Anthranilate phosphoribosyltransferase (367 aa).

Residues G105, 108-109 (GD), T113, 115-118 (NIST), 133-141 (KHGNRAASS), and G145 each bind 5-phospho-alpha-D-ribose 1-diphosphate. G105 is an anthranilate binding site. S117 provides a ligand contact to Mg(2+). Residue N136 participates in anthranilate binding. R191 contributes to the anthranilate binding site. Residues D249 and E250 each coordinate Mg(2+).

It belongs to the anthranilate phosphoribosyltransferase family. As to quaternary structure, homodimer. The cofactor is Mg(2+).

It carries out the reaction N-(5-phospho-beta-D-ribosyl)anthranilate + diphosphate = 5-phospho-alpha-D-ribose 1-diphosphate + anthranilate. Its pathway is amino-acid biosynthesis; L-tryptophan biosynthesis; L-tryptophan from chorismate: step 2/5. Catalyzes the transfer of the phosphoribosyl group of 5-phosphorylribose-1-pyrophosphate (PRPP) to anthranilate to yield N-(5'-phosphoribosyl)-anthranilate (PRA). This Corynebacterium jeikeium (strain K411) protein is Anthranilate phosphoribosyltransferase.